A 58-amino-acid polypeptide reads, in one-letter code: Ribulose bisphosphate carboxylase large chain (58 aa).

Positions 1-2 (MS) are excised as a propeptide. Position 3 is an N-acetylproline (proline 3). Lysine 14 carries the N6,N6,N6-trimethyllysine modification.

Belongs to the RuBisCO large chain family. Type I subfamily. In terms of assembly, heterohexadecamer of 8 large chains and 8 small chains.

The protein localises to the plastid. It is found in the chloroplast. It carries out the reaction 2 (2R)-3-phosphoglycerate + 2 H(+) = D-ribulose 1,5-bisphosphate + CO2 + H2O. The catalysed reaction is D-ribulose 1,5-bisphosphate + O2 = 2-phosphoglycolate + (2R)-3-phosphoglycerate + 2 H(+). Functionally, ruBisCO catalyzes two reactions: the carboxylation of D-ribulose 1,5-bisphosphate, the primary event in carbon dioxide fixation, as well as the oxidative fragmentation of the pentose substrate in the photorespiration process. Both reactions occur simultaneously and in competition at the same active site. This is Ribulose bisphosphate carboxylase large chain (rbcL) from Euphorbia characias (Albanian spurge).